Here is a 116-residue protein sequence, read N- to C-terminus: Carbohydrate-binding protein AQN-3 (116 aa).

Cys9 and Cys30 are joined by a disulfide. The region spanning 9-110 is the CUB domain; that stretch reads CGGFLKNYSG…SSFNVYFYGI (102 aa). The N-linked (GlcNAc...) asparagine glycan is linked to Asn50. Cys53 and Cys74 are disulfide-bonded. Residue His85 is modified to Methylhistidine.

This sequence belongs to the spermadhesin family. Post-translationally, the residue at position 85 was identified as a methylhistidine by mass spectrometry.

It localises to the secreted. Its function is as follows. AQN proteins mediate the binding of boar spermatozoa to component(s) of the egg's zona pellucida by a carbohydrate-binding mechanism. AQN proteins are secretory components of the male accessory glands being coated to the sperm surface at the time of ejaculation. They possess as well heparin-, serine-protease-inhibitor-binding capability. The chain is Carbohydrate-binding protein AQN-3 from Sus scrofa (Pig).